Here is a 220-residue protein sequence, read N- to C-terminus: Pyridoxine/pyridoxamine 5'-phosphate oxidase (220 aa).

Substrate contacts are provided by residues 8–11 (RKSY) and lysine 66. FMN contacts are provided by residues 61–66 (RVVLIK), 76–77 (FT), arginine 82, and lysine 83. Residues tyrosine 123, arginine 127, and serine 131 each contribute to the substrate site. Residues 140–141 (QS) and tryptophan 184 each bind FMN. 190–192 (RLH) serves as a coordination point for substrate. Residue arginine 194 participates in FMN binding.

This sequence belongs to the pyridoxamine 5'-phosphate oxidase family. In terms of assembly, homodimer. It depends on FMN as a cofactor.

The enzyme catalyses pyridoxamine 5'-phosphate + O2 + H2O = pyridoxal 5'-phosphate + H2O2 + NH4(+). It carries out the reaction pyridoxine 5'-phosphate + O2 = pyridoxal 5'-phosphate + H2O2. The protein operates within cofactor metabolism; pyridoxal 5'-phosphate salvage; pyridoxal 5'-phosphate from pyridoxamine 5'-phosphate: step 1/1. It participates in cofactor metabolism; pyridoxal 5'-phosphate salvage; pyridoxal 5'-phosphate from pyridoxine 5'-phosphate: step 1/1. In terms of biological role, catalyzes the oxidation of either pyridoxine 5'-phosphate (PNP) or pyridoxamine 5'-phosphate (PMP) into pyridoxal 5'-phosphate (PLP). In Albidiferax ferrireducens (strain ATCC BAA-621 / DSM 15236 / T118) (Rhodoferax ferrireducens), this protein is Pyridoxine/pyridoxamine 5'-phosphate oxidase.